A 333-amino-acid chain; its full sequence is Torsin-1A (333 aa).

The signal sequence occupies residues 1–20 (MKLGRAALALLLLAPCVVRA). Residues 92 to 252 (KPKKPLTLSL…VSVFNNKNSG (161 aa)) are interaction with SNAPIN. Residue 103 to 110 (GWTGTGKN) coordinates ATP. N-linked (GlcNAc...) asparagine glycans are attached at residues N144 and N159. The interaction with KLC1 stretch occupies residues 252 to 333 (GFWHSSLIDR…FTKLDYYLDD (82 aa)). An interaction with SYNE3 region spans residues 313–333 (KVFSDKGCKTVFTKLDYYLDD).

This sequence belongs to the ClpA/ClpB family. Torsin subfamily. As to quaternary structure, homohexamer. Interacts with TOR1B; the interaction may be specific of neural tissues. Interacts (ATP-bound) with TOR1AIP1 and TOR1AIP2; the interactions induce ATPase activity. Interacts with KLHL14; preferentially when ATP-free. Interacts with KLC1 (via TPR repeats); the interaction associates TOR1A with the kinesin oligomeric complex. Interacts with COPS4; the interaction associates TOR1A with the CSN complex. Interacts with SNAPIN; the interaction is direct and associates SNAPIN with the CSN complex. Interacts with STON2. Interacts (ATP-bound) with SYNE3 (via KASH domain); the interaction is required for SYNE3 nuclear envelope localization. Interacts with VIM; the interaction associates TOR1A with the cytoskeleton. Interacts with PLEC. Interacts (ATP-bound) with SLC6A3; regulates SLC6A3 transport to the plasma membrane. Post-translationally, N-glycosylated. Widely expressed (at protein level).

The protein localises to the endoplasmic reticulum lumen. It is found in the nucleus membrane. The protein resides in the cell projection. It localises to the growth cone. Its subcellular location is the cytoplasmic vesicle membrane. The protein localises to the synapse. It is found in the synaptosome. The protein resides in the cytoplasm. It localises to the cytoskeleton. Its subcellular location is the cytoplasmic vesicle. The protein localises to the secretory vesicle. It is found in the synaptic vesicle. It catalyses the reaction ATP + H2O = ADP + phosphate + H(+). Its function is as follows. Protein with chaperone functions important for the control of protein folding, processing, stability and localization as well as for the reduction of misfolded protein aggregates. Involved in the regulation of synaptic vesicle recycling, controls STON2 protein stability in collaboration with the COP9 signalosome complex (CSN). In the nucleus, may link the cytoskeleton with the nuclear envelope, this mechanism seems to be crucial for the control of nuclear polarity, cell movement and, specifically in neurons, nuclear envelope integrity. Participates in the cellular trafficking and may regulate the subcellular location of multipass membrane proteins such as the dopamine transporter SLC6A3, leading to the modulation of dopamine neurotransmission. In the endoplasmic reticulum, plays a role in the quality control of protein folding by increasing clearance of misfolded proteins such as SGCE variants or holding them in an intermediate state for proper refolding. May have a redundant function with TOR1B in non-neural tissues. The polypeptide is Torsin-1A (Tor1a) (Mus musculus (Mouse)).